Consider the following 279-residue polypeptide: B3 domain-containing protein Os05g0481400 (279 aa).

The segment at 45 to 68 (ARLQKSTRASPKPRKKFEVGATEV) is disordered. Positions 139–230 (FVKTMVRSHV…RFKIYIIKAV (92 aa)) form a DNA-binding region, TF-B3. Acidic residues-rich tracts occupy residues 233–244 (DANESEPADEEA) and 252–262 (TEDAAEQDDSP). The interval 233–279 (DANESEPADEEAIGDKDTSTEDAAEQDDSPNAEPLKGTKRRKLRGRR) is disordered. Residues 269–279 (GTKRRKLRGRR) show a composition bias toward basic residues.

It localises to the nucleus. The polypeptide is B3 domain-containing protein Os05g0481400 (Oryza sativa subsp. japonica (Rice)).